The primary structure comprises 301 residues: MLALRVARGSWGALRGAAWAPGTRPSKRRACWALLPPVPCCLGCLAERWRLRPAALGLRLPGIGQRNHCSGAGKAAPRPAAGAGAAAEAPGGQWGPASTPSLYENPWTIPNMLSMTRIGLAPVLGYLIIEEDFNIALGVFALAGLTDLLDGFIARNWANQRSALGSALDPLADKILISILYVSLTYADLIPVPLTYMIISRDVMLIAAVFYVRYRTLPTPRTLAKYFNPCYATARLKPTFISKVNTAVQLILVAASLAAPVFNYADSIYLQILWCFTAFTTAASAYSYYHYGRKTVQVIKD.

Positions 70–93 (SGAGKAAPRPAAGAGAAAEAPGGQ) are disordered. Low complexity predominate over residues 71–93 (GAGKAAPRPAAGAGAAAEAPGGQ). 5 consecutive transmembrane segments (helical) span residues 109 to 129 (IPNM…YLII), 133 to 153 (FNIA…DGFI), 190 to 212 (IPVP…VFYV), 250 to 270 (LILV…SIYL), and 272 to 292 (ILWC…YHYG).

This sequence belongs to the CDP-alcohol phosphatidyltransferase class-I family. A divalent metal cation is required as a cofactor. Highly expressed in tissues such as heart, skeletal muscle and liver.

The protein resides in the mitochondrion inner membrane. It catalyses the reaction a CDP-1,2-diacyl-sn-glycerol + a 1,2-diacyl-sn-glycero-3-phospho-(1'-sn-glycerol) = a cardiolipin + CMP + H(+). Functionally, catalyzes the synthesis of cardiolipin (CL) (diphosphatidylglycerol) by specifically transferring a phosphatidyl group from CDP-diacylglycerol to phosphatidylglycerol (PG). CL is a key phospholipid in mitochondrial membranes and plays important roles in maintaining the functional integrity and dynamics of mitochondria under both optimal and stress conditions. The sequence is that of Cardiolipin synthase (CMP-forming) (CRLS1) from Homo sapiens (Human).